Reading from the N-terminus, the 571-residue chain is Decapping 5-like protein (571 aa).

Over residues 1-17 (MASESSQSSSPSSSQPP) the composition is skewed to low complexity. Disordered regions lie at residues 1–27 (MASESSQSSSPSSSQPPSSVPSPSPGN), 102–141 (LQVNPSPSAQSRQEIQSEQDVNQSPHSRPAMTMSSPISGY), 159–187 (LSSKPVPVTQHSSVPLSFQPPSANAGSLT), and 258–305 (SQVV…SEAQ). The Sm domain maps to 25-108 (PGNNVGDTFI…IKDLQVNPSP (84 aa)). Composition is skewed to polar residues over residues 104 to 138 (VNPSPSAQSRQEIQSEQDVNQSPHSRPAMTMSSPI) and 167 to 187 (TQHSSVPLSFQPPSANAGSLT). Positions 264–279 (SPDVSSNQSYSSNPSP) are enriched in low complexity. Polar residues predominate over residues 293-305 (SVSSNLSPPSEAQ). Residues 419–455 (RIPSSSIEYTEEFDFEAMNEKFKKSELWGYLGRNNQR) enclose the DFDF domain. Residues 474–489 (PAYNKDDFFDTISCNQ) carry the FFD box motif. A TFG box motif is present at residues 498 to 518 (QQHNQFPEHMRQVPEAFGNNF).

Belongs to the LSM14 family. Homodimer. Component of the decapping complex.

Its subcellular location is the cytoplasm. The protein localises to the P-body. As a component of the decapping complex, involved in the degradation of mRNAs. Promotes P-body formation. Translational repressor. This chain is Decapping 5-like protein (DCP5-L), found in Arabidopsis thaliana (Mouse-ear cress).